The following is a 119-amino-acid chain: Small ribosomal subunit protein bS6 (119 aa).

A disordered region spans residues 96-119 (VTEPSPLARSQEKDEEEGGRTAEA).

Belongs to the bacterial ribosomal protein bS6 family.

Binds together with bS18 to 16S ribosomal RNA. The chain is Small ribosomal subunit protein bS6 from Alkalilimnicola ehrlichii (strain ATCC BAA-1101 / DSM 17681 / MLHE-1).